The primary structure comprises 271 residues: Urease accessory protein UreD (271 aa).

This sequence belongs to the UreD family. UreD, UreF and UreG form a complex that acts as a GTP-hydrolysis-dependent molecular chaperone, activating the urease apoprotein by helping to assemble the nickel containing metallocenter of UreC. The UreE protein probably delivers the nickel.

It is found in the cytoplasm. Required for maturation of urease via the functional incorporation of the urease nickel metallocenter. The polypeptide is Urease accessory protein UreD (Azorhizobium caulinodans (strain ATCC 43989 / DSM 5975 / JCM 20966 / LMG 6465 / NBRC 14845 / NCIMB 13405 / ORS 571)).